The following is a 516-amino-acid chain: Protein psiC (516 aa).

Positions 1–19 are cleaved as a signal peptide; that stretch reads MKILILSFFLILGINLVFC. The PA14 domain occupies 109-249; the sequence is ESKDEPGIYV…YDACGVCLGK (141 aa). 7 N-linked (GlcNAc...) asparagine glycosylation sites follow: Asn134, Asn234, Asn250, Asn284, Asn333, Asn357, and Asn367. The segment covering 418-427 has biased composition (low complexity); that stretch reads DIIIDSSSDI. The disordered stretch occupies residues 418–465; the sequence is DIIIDSSSDIPIPTLSPSPQPSRFPTDTPTNTPMPPTRPPTPTEDPKI. The segment covering 449 to 460 has biased composition (pro residues); sequence TPMPPTRPPTPT.

Belongs to the prespore-cell-inducing factor family.

It localises to the secreted. This is Protein psiC (psiC) from Dictyostelium discoideum (Social amoeba).